The sequence spans 269 residues: NAD-capped RNA hydrolase NudC (269 aa).

Arg-81 is a binding site for substrate. Residues Cys-110, Cys-113, Cys-128, and Cys-131 each coordinate Zn(2+). Tyr-136 is a binding site for substrate. Residues 137–260 enclose the Nudix hydrolase domain; it reads PRIFPCIIVA…TIARALIEQT (124 aa). Residues Ala-170, Glu-186, and Glu-190 each contribute to the a divalent metal cation site. Residues 171–192 carry the Nudix box motif; sequence GFVEVGETLEQCVAREVLEETG. 204-211 is a substrate binding site; it reads QPWAFPSS. Glu-231 is a binding site for a divalent metal cation. Ala-253 contributes to the substrate binding site.

Belongs to the Nudix hydrolase family. NudC subfamily. In terms of assembly, homodimer. It depends on Mg(2+) as a cofactor. Mn(2+) serves as cofactor. Requires Zn(2+) as cofactor.

The catalysed reaction is a 5'-end NAD(+)-phospho-ribonucleoside in mRNA + H2O = a 5'-end phospho-adenosine-phospho-ribonucleoside in mRNA + beta-nicotinamide D-ribonucleotide + 2 H(+). It catalyses the reaction NAD(+) + H2O = beta-nicotinamide D-ribonucleotide + AMP + 2 H(+). It carries out the reaction NADH + H2O = reduced beta-nicotinamide D-ribonucleotide + AMP + 2 H(+). MRNA decapping enzyme that specifically removes the nicotinamide adenine dinucleotide (NAD) cap from a subset of mRNAs by hydrolyzing the diphosphate linkage to produce nicotinamide mononucleotide (NMN) and 5' monophosphate mRNA. The NAD-cap is present at the 5'-end of some mRNAs and stabilizes RNA against 5'-processing. Has preference for mRNAs with a 5'-end purine. Catalyzes the hydrolysis of a broad range of dinucleotide pyrophosphates. This chain is NAD-capped RNA hydrolase NudC, found in Vibrio cholerae serotype O1 (strain ATCC 39315 / El Tor Inaba N16961).